The sequence spans 550 residues: Chaperonin GroEL (550 aa).

Residues 30–33 (TLGP), K51, 87–91 (DGTTT), G416, 480–482 (NVA), and D496 contribute to the ATP site. Residues 525-550 (LPKKDDEGGGGDMGGMGGMGGMGGMM) form a disordered region. The segment covering 534 to 550 (GGDMGGMGGMGGMGGMM) has biased composition (gly residues).

Belongs to the chaperonin (HSP60) family. In terms of assembly, forms a cylinder of 14 subunits composed of two heptameric rings stacked back-to-back. Interacts with the co-chaperonin GroES.

The protein resides in the cytoplasm. The enzyme catalyses ATP + H2O + a folded polypeptide = ADP + phosphate + an unfolded polypeptide.. In terms of biological role, together with its co-chaperonin GroES, plays an essential role in assisting protein folding. The GroEL-GroES system forms a nano-cage that allows encapsulation of the non-native substrate proteins and provides a physical environment optimized to promote and accelerate protein folding. The chain is Chaperonin GroEL from Halorhodospira halophila (strain DSM 244 / SL1) (Ectothiorhodospira halophila (strain DSM 244 / SL1)).